Here is a 733-residue protein sequence, read N- to C-terminus: Polyribonucleotide nucleotidyltransferase (733 aa).

2 residues coordinate Mg(2+): Asp488 and Asp494. Residues 555–614 (PRIEMMTIPVEKIREVIGSGGKVIREIVEQTGAKINIEDDGTIKIASPDTKSIETAKSWI) form the KH domain. One can recognise an S1 motif domain in the interval 624–692 (GTIYQGTVVK…ERGKIRLSMK (69 aa)). The disordered stretch occupies residues 698–733 (TGKEIPQDDLIKTEKEQNPDEKNKSEKKRHNRKKED). Basic and acidic residues predominate over residues 702-721 (IPQDDLIKTEKEQNPDEKNK). Basic residues predominate over residues 722–733 (SEKKRHNRKKED).

The protein belongs to the polyribonucleotide nucleotidyltransferase family. Mg(2+) is required as a cofactor.

Its subcellular location is the cytoplasm. It catalyses the reaction RNA(n+1) + phosphate = RNA(n) + a ribonucleoside 5'-diphosphate. Its function is as follows. Involved in mRNA degradation. Catalyzes the phosphorolysis of single-stranded polyribonucleotides processively in the 3'- to 5'-direction. The sequence is that of Polyribonucleotide nucleotidyltransferase from Bartonella bacilliformis (strain ATCC 35685 / KC583 / Herrer 020/F12,63).